We begin with the raw amino-acid sequence, 181 residues long: Regulator of G-protein signaling 10 (181 aa).

Residues 1-32 (MFNRAVSRLSRKRPPSDIHDSDGSSSSSHQSL) are disordered. The span at 23-32 (GSSSSSHQSL) shows a compositional bias: low complexity. Phosphoserine occurs at positions 24 and 41. The RGS domain maps to 41-156 (SLENLLEDPE…LKSDLFLKHK (116 aa)). C74 carries S-palmitoyl cysteine lipidation. Residues 158 to 181 (TEEEEEDLPDAQTAAKRASRIYNT) are disordered. The residue at position 176 (S176) is a Phosphoserine.

Interacts with GNAZ, GNAI1 and GNAI3. Associates specifically with the activated, GTP-bound forms of GNAZ and GNAI3.

It is found in the cytoplasm. Its subcellular location is the cytosol. It localises to the nucleus. Regulates G protein-coupled receptor signaling cascades, including signaling downstream of the muscarinic acetylcholine receptor CHRM2. Inhibits signal transduction by increasing the GTPase activity of G protein alpha subunits, thereby driving them into their inactive GDP-bound form. Modulates the activity of potassium channels that are activated in response to CHRM2 signaling. Activity on GNAZ is inhibited by palmitoylation of the G-protein. In Homo sapiens (Human), this protein is Regulator of G-protein signaling 10 (RGS10).